We begin with the raw amino-acid sequence, 601 residues long: Kelch repeat and BTB domain-containing protein 8 (601 aa).

The disordered stretch occupies residues 1-25 (MAASADLSKSSPTPNGIPSSDPASD). Polar residues predominate over residues 7-22 (LSKSSPTPNGIPSSDP). Residues 49–117 (TDIVVEVDHG…AYTSRVILTE (69 aa)) form the BTB domain. Positions 153 to 252 (IGVFIFADHY…PLMEDTFIEK (100 aa)) constitute a BACK domain. Kelch repeat units follow at residues 336 to 390 (DIYI…YCCG), 391 to 441 (KMYA…EYKE), 443 to 481 (IYVLQGEFFLFYEPQKDYWGFLTPMTVPRIQGLAAVYKD), 483 to 532 (IYYI…LFQN), and 542 to 588 (QVTV…FECA).

This sequence belongs to the KBTBD8 family. Component of the BCR(KBTBD8) E3 ubiquitin ligase complex, at least composed of CUL3, KBTBD8 and RBX1.

It localises to the cytoplasm. The protein resides in the cytoskeleton. Its subcellular location is the spindle. It is found in the golgi apparatus. Substrate-specific adapter of a BCR (BTB-CUL3-RBX1) E3 ubiquitin ligase complex that acts as a regulator of neural crest specification. The BCR(KBTBD8) complex acts by mediating monoubiquitination of NOLC1 and TCOF1: monoubiquitination promotes the formation of a NOLC1-TCOF1 complex that acts as a platform to connect RNA polymerase I with enzymes responsible for ribosomal processing and modification, leading to remodel the translational program of differentiating cells in favor of neural crest specification. The protein is Kelch repeat and BTB domain-containing protein 8 (KBTBD8) of Homo sapiens (Human).